The primary structure comprises 385 residues: Mannitol-1-phosphate 5-dehydrogenase (385 aa).

3 to 14 (ALQFGAGNIGRG) lines the NAD(+) pocket.

The protein belongs to the mannitol dehydrogenase family.

The catalysed reaction is D-mannitol 1-phosphate + NAD(+) = beta-D-fructose 6-phosphate + NADH + H(+). This is Mannitol-1-phosphate 5-dehydrogenase from Buchnera aphidicola subsp. Acyrthosiphon pisum (strain 5A).